The primary structure comprises 219 residues: Proteasome subunit beta type-9 (219 aa).

The propeptide at 1 to 20 (MLRAGAPTAGSFRTEEVHTG) is removed in mature form. T21 acts as the Nucleophile in catalysis. N6-acetyllysine occurs at positions 53 and 109.

The protein belongs to the peptidase T1B family. In terms of assembly, the 26S proteasome consists of a 20S proteasome core and two 19S regulatory subunits. The 20S proteasome core is composed of 28 subunits that are arranged in four stacked rings, resulting in a barrel-shaped structure. The two end rings are each formed by seven alpha subunits, and the two central rings are each formed by seven beta subunits. The catalytic chamber with the active sites is on the inside of the barrel. Component of the immunoproteasome, where it displaces the equivalent housekeeping subunit PSMB6. Component of the spermatoproteasome, a form of the proteasome specifically found in testis. Autocleaved. The resulting N-terminal Thr residue of the mature subunit is responsible for the nucleophile proteolytic activity.

The protein resides in the cytoplasm. The protein localises to the nucleus. It catalyses the reaction Cleavage of peptide bonds with very broad specificity.. Its function is as follows. The proteasome is a multicatalytic proteinase complex which is characterized by its ability to cleave peptides with Arg, Phe, Tyr, Leu, and Glu adjacent to the leaving group at neutral or slightly basic pH. The proteasome has an ATP-dependent proteolytic activity. This subunit is involved in antigen processing to generate class I binding peptides. In Mus musculus bactrianus (Southwestern Asian house mouse), this protein is Proteasome subunit beta type-9 (Psmb9).